The chain runs to 591 residues: Aspartate--tRNA ligase (591 aa).

Position 174 (Glu174) interacts with L-aspartate. Residues 198–201 are aspartate; sequence QLFK. Arg220 is an L-aspartate binding site. ATP-binding positions include 220-222 and Gln229; that span reads RDE. His450 provides a ligand contact to L-aspartate. Glu486 lines the ATP pocket. Arg493 contributes to the L-aspartate binding site. 538–541 provides a ligand contact to ATP; it reads GLDR.

This sequence belongs to the class-II aminoacyl-tRNA synthetase family. Type 1 subfamily. In terms of assembly, homodimer.

It localises to the cytoplasm. It carries out the reaction tRNA(Asp) + L-aspartate + ATP = L-aspartyl-tRNA(Asp) + AMP + diphosphate. Its function is as follows. Catalyzes the attachment of L-aspartate to tRNA(Asp) in a two-step reaction: L-aspartate is first activated by ATP to form Asp-AMP and then transferred to the acceptor end of tRNA(Asp). This chain is Aspartate--tRNA ligase, found in Leuconostoc mesenteroides subsp. mesenteroides (strain ATCC 8293 / DSM 20343 / BCRC 11652 / CCM 1803 / JCM 6124 / NCDO 523 / NBRC 100496 / NCIMB 8023 / NCTC 12954 / NRRL B-1118 / 37Y).